The chain runs to 315 residues: NADH-cytochrome b5 reductase-like (315 aa).

One can recognise an Oxidoreductase-like domain in the interval 19–55 (RPTEPLPSQCCGSGCSPCVFDLYHRDLARWEAAQASK). Positions 75 to 177 (ETFVAFCIIA…RGPFGDFFYK (103 aa)) constitute an FAD-binding FR-type domain. Residues 157 to 172 (ESWR…GPFG) and 182 to 214 (GELL…TFVT) contribute to the FAD site.

Belongs to the flavoprotein pyridine nucleotide cytochrome reductase family. FAD is required as a cofactor.

It carries out the reaction 2 Fe(III)-[cytochrome b5] + NADH = 2 Fe(II)-[cytochrome b5] + NAD(+) + H(+). In terms of biological role, NADH-cytochrome b5 reductases are involved in desaturation and elongation of fatty acids, cholesterol biosynthesis, drug metabolism, and, in erythrocyte, methemoglobin reduction. The protein is NADH-cytochrome b5 reductase-like (CYB5RL) of Homo sapiens (Human).